The primary structure comprises 902 residues: Nuclear factor of activated T-cells, cytoplasmic 4 (902 aa).

2 disordered regions span residues 16 to 180 (VFGE…SSWS) and 208 to 369 (RFGL…GGSR). Over residues 50–81 (EPPPYGAAPIGIPRPPPPRPGMHSPPPRPAPS) the composition is skewed to pro residues. The span at 96-109 (GGPGGGAGGAGGGR) shows a compositional bias: gly residues. The interval 114-119 (PSIRIT) is calcineurin-binding. Residues 151–165 (GFGGYREAGGQGGGA) show a composition bias toward gly residues. The segment covering 166-180 (FFSPSPGSSSLSSWS) has biased composition (low complexity). A phosphoserine; by MAPK7 and MAPK14 mark is found at Ser168 and Ser170. Phosphoserine; by MAPK8 and MAPK9 occurs at positions 213 and 217. One copy of the SP 1 repeat lies at 213–229 (SPLPSPRASPRPWTPED). The 2 approximate SP repeats stretch occupies residues 213–293 (SPLPSPRASP…LSRRGSLGEE (81 aa)). 2 stretches are compositionally biased toward pro residues: residues 215-227 (LPSPRASPRPWTP) and 254-263 (GPTPASPRPA). The Nuclear localization signal motif lies at 268–270 (KRR). Over residues 272-288 (SSSGTPSSASPALSRRG) the composition is skewed to low complexity. An SP 2; approximate repeat occupies 277 to 293 (PSSASPALSRRGSLGEE). 2 positions are modified to phosphoserine; by RPS6KA3: Ser289 and Ser344. An RHD domain is found at 401–582 (SALPPLDWPL…VPIECSQRSA (182 aa)). A DNA-binding region spans residues 430 to 437 (RAHYETEG). The 98-residue stretch at 586 to 683 (PQVEAYSPSA…KRSPTQSFRF (98 aa)) folds into the IPT/TIG domain. The Nuclear localization signal signature appears at 672–674 (RRK). Lys689 is covalently cross-linked (Glycyl lysine isopeptide (Lys-Gly) (interchain with G-Cter in SUMO2)). The tract at residues 791-870 (PYGGRGSSFS…GGYSSGFRDS (80 aa)) is disordered. A compositionally biased stretch (pro residues) spans 805-824 (FSPPAPFRPPPLPASPPLEG).

Member of the multicomponent NFATC transcription complex that consists of at least two components, a pre-existing cytoplasmic component NFATC2 and an inducible nuclear component NFATC1. Other NFAT proteins, such as NFATC3, or members of the activating protein-1 (AP-1) family and MAF can also bind the complex. NFAT proteins can bind DNA as monomers or dimers. Component of a promoter-binding complex composed of STAT3, NFATC3 and NFATC4; complex formation is enhanced by calcineurin. Interacts with CREBBP; this interaction potentiates transcription activation. Interacts with MAPK8/JNK1 and MAPK9/JNK2. Interacts with GATA4 (via the second Zn finger). Interacts (via N-terminus) with IRAK1 (via C-terminus). Interacts with RPS6KA3. Interacts with HOMER1, HOMER2 and HOMER3; this interaction competes with calcineurin/PPP3CA-binding and hence prevents NFATC4 dephosphorylation and activation. Interacts with ESR1 and ESR2; this interaction decreases NFATC4 transcriptional activity. Interacts with MTOR and MAPK7/ERK5. Interacts with TRIM17; this interaction prevents NFATC3 nuclear localization. Interacts with TCF25 (via C-terminus); the interaction leads to suppression of NFATC4 transcription factor activity and is reduced following stimulation with angiotensin-2. Phosphorylated by NFATC-kinases; dephosphorylated by calcineurin/PPP3CA. Phosphorylated on Ser-168 and Ser-170 by MTOR, IRAK1, MAPK7/ERK5 and MAPK14/p38, on Ser-213 and Ser-217 by MAPK8/JNK1 and MAPK9/JNK2, and on Ser-289 and Ser-344 by RPS6KA3. Phosphorylated by GSK3B. Phosphorylation by GSK3B markedly increases NFATC4 ubiquitination. Phosphorylation at Ser-168 and Ser-170 is stimulated by UV irradiation. Phosphorylation determines subcellular location: the hyperphosphorylated protein is cytosolic, while the dephosphorylated form is targeted to the nucleus. Post-translationally, ubiquitinated, leading to degradation by the proteasome. Ubiquitination may be stimulated by GSK3B-dependent phosphorylation. Polyubiquitin linkage mainly occurs through 'Lys-48'. As to expression, widely expressed, with high levels in placenta, lung, kidney, testis and ovary. Weakly expressed in spleen and thymus. In the hippocampus, expressed in the granular layer of the dentate gyrus, in the pyramidal neurons of CA3 region, and in the hippocampal fissure. Expressed in the heart (at protein level).

The protein resides in the cytoplasm. It is found in the nucleus. Its activity is regulated as follows. Transcriptional activity may be repressed by ESR1 and ESR2. In terms of biological role, ca(2+)-regulated transcription factor that is involved in several processes, including the development and function of the immune, cardiovascular, musculoskeletal, and nervous systems. Involved in T-cell activation, stimulating the transcription of cytokine genes, including that of IL2 and IL4. Along with NFATC3, involved in embryonic heart development. Following JAK/STAT signaling activation and as part of a complex with NFATC3 and STAT3, binds to the alpha-beta E4 promoter region of CRYAB and activates transcription in cardiomyocytes. Involved in mitochondrial energy metabolism required for cardiac morphogenesis and function. Transactivates many genes involved in the cardiovascular system, including AGTR2, NPPB/BNP (in synergy with GATA4), NPPA/ANP/ANF and MYH7/beta-MHC. Involved in the regulation of adult hippocampal neurogenesis. Involved in BDNF-driven pro-survival signaling in hippocampal adult-born neurons. Involved in the formation of long-term spatial memory and long-term potentiation. In cochlear nucleus neurons, may play a role in deafferentation-induced apoptosis during the developmental critical period, when auditory neurons depend on afferent input for survival. Binds to and activates the BACE1/Beta-secretase 1 promoter, hence may regulate the proteolytic processing of the amyloid precursor protein (APP). Plays a role in adipocyte differentiation. May be involved in myoblast differentiation into myotubes. Binds the consensus DNA sequence 5'-GGAAAAT-3'. In the presence of CREBBP, activates TNF transcription. Binds to PPARG gene promoter and regulates its activity. Binds to PPARG and REG3G gene promoters. This chain is Nuclear factor of activated T-cells, cytoplasmic 4 (NFATC4), found in Homo sapiens (Human).